A 129-amino-acid polypeptide reads, in one-letter code: MRLLHHGEYGTKLIGGKCSIDGKLGHPCPLSRRRKKHLREKEMGPQYVRMYGPKRKAIIRTGNPDDGINLPDTGRGTLTAATIWSRAYHSNYSYLVRPKVVTLSKHRELMTTFLLYVLYVCIYISAFIK.

The N-linked (GlcNAc...) asparagine glycan is linked to N91. A helical transmembrane segment spans residues 109-128 (LMTTFLLYVLYVCIYISAFI).

The protein resides in the membrane. Functionally, involved in K1 killer toxin resistance. This is Protein FYV12 (FYV12) from Saccharomyces cerevisiae (strain ATCC 204508 / S288c) (Baker's yeast).